The following is a 376-amino-acid chain: Chaperone protein DnaJ (376 aa).

The 66-residue stretch at 5 to 70 (DYYEILGVSK…QKRAAYDQYG (66 aa)) folds into the J domain. The CR-type zinc-finger motif lies at 131–209 (GVTKEIRIPT…CHGHGRVERS (79 aa)). C144, C147, C161, C164, C183, C186, C197, and C200 together coordinate Zn(2+). 4 CXXCXGXG motif repeats span residues 144-151 (CDVCHGSG), 161-168 (CPTCHGSG), 183-190 (CPHCQGRG), and 197-204 (CNKCHGHG).

This sequence belongs to the DnaJ family. In terms of assembly, homodimer. It depends on Zn(2+) as a cofactor.

It is found in the cytoplasm. Functionally, participates actively in the response to hyperosmotic and heat shock by preventing the aggregation of stress-denatured proteins and by disaggregating proteins, also in an autonomous, DnaK-independent fashion. Unfolded proteins bind initially to DnaJ; upon interaction with the DnaJ-bound protein, DnaK hydrolyzes its bound ATP, resulting in the formation of a stable complex. GrpE releases ADP from DnaK; ATP binding to DnaK triggers the release of the substrate protein, thus completing the reaction cycle. Several rounds of ATP-dependent interactions between DnaJ, DnaK and GrpE are required for fully efficient folding. Also involved, together with DnaK and GrpE, in the DNA replication of plasmids through activation of initiation proteins. The polypeptide is Chaperone protein DnaJ (Shigella flexneri).